Reading from the N-terminus, the 237-residue chain is DNA repair protein RecO (237 aa).

Belongs to the RecO family.

Involved in DNA repair and RecF pathway recombination. In Cereibacter sphaeroides (strain ATCC 17025 / ATH 2.4.3) (Rhodobacter sphaeroides), this protein is DNA repair protein RecO.